The primary structure comprises 233 residues: Large ribosomal subunit protein uL1 (233 aa).

It belongs to the universal ribosomal protein uL1 family. Part of the 50S ribosomal subunit.

Binds directly to 23S rRNA. The L1 stalk is quite mobile in the ribosome, and is involved in E site tRNA release. Its function is as follows. Protein L1 is also a translational repressor protein, it controls the translation of the L11 operon by binding to its mRNA. The polypeptide is Large ribosomal subunit protein uL1 (Campylobacter concisus (strain 13826)).